The chain runs to 200 residues: Protein GrpE (200 aa).

The span at 1-11 (MTDNDGQKDFS) shows a compositional bias: basic and acidic residues. Residues 1-43 (MTDNDGQKDFSEAAAENAGSKPGEPRVSKPYIMPDDPEETPSE) form a disordered region.

This sequence belongs to the GrpE family. As to quaternary structure, homodimer.

The protein resides in the cytoplasm. Functionally, participates actively in the response to hyperosmotic and heat shock by preventing the aggregation of stress-denatured proteins, in association with DnaK and GrpE. It is the nucleotide exchange factor for DnaK and may function as a thermosensor. Unfolded proteins bind initially to DnaJ; upon interaction with the DnaJ-bound protein, DnaK hydrolyzes its bound ATP, resulting in the formation of a stable complex. GrpE releases ADP from DnaK; ATP binding to DnaK triggers the release of the substrate protein, thus completing the reaction cycle. Several rounds of ATP-dependent interactions between DnaJ, DnaK and GrpE are required for fully efficient folding. This chain is Protein GrpE, found in Afipia carboxidovorans (strain ATCC 49405 / DSM 1227 / KCTC 32145 / OM5) (Oligotropha carboxidovorans).